A 310-amino-acid polypeptide reads, in one-letter code: tRNA uridine(34) hydroxylase (310 aa).

One can recognise a Rhodanese domain in the interval 134 to 232; the sequence is DDPDTLLIDT…YFEEVSQSES (99 aa). The Cysteine persulfide intermediate role is filled by Cys-192.

Belongs to the TrhO family.

It catalyses the reaction uridine(34) in tRNA + AH2 + O2 = 5-hydroxyuridine(34) in tRNA + A + H2O. Functionally, catalyzes oxygen-dependent 5-hydroxyuridine (ho5U) modification at position 34 in tRNAs. In Prochlorococcus marinus (strain MIT 9303), this protein is tRNA uridine(34) hydroxylase.